A 408-amino-acid chain; its full sequence is Imidazolonepropionase (408 aa).

His73 and His75 together coordinate Fe(3+). Zn(2+)-binding residues include His73 and His75. 4-imidazolone-5-propanoate is bound by residues Arg82, Tyr145, and His178. An N-formimidoyl-L-glutamate-binding site is contributed by Tyr145. His243 contacts Fe(3+). His243 contributes to the Zn(2+) binding site. Gln246 contributes to the 4-imidazolone-5-propanoate binding site. Asp318 provides a ligand contact to Fe(3+). Asp318 is a Zn(2+) binding site. The N-formimidoyl-L-glutamate site is built by Asn320 and Gly322. Ser323 is a 4-imidazolone-5-propanoate binding site.

It belongs to the metallo-dependent hydrolases superfamily. HutI family. It depends on Zn(2+) as a cofactor. Requires Fe(3+) as cofactor.

It localises to the cytoplasm. The enzyme catalyses 4-imidazolone-5-propanoate + H2O = N-formimidoyl-L-glutamate. It participates in amino-acid degradation; L-histidine degradation into L-glutamate; N-formimidoyl-L-glutamate from L-histidine: step 3/3. Functionally, catalyzes the hydrolytic cleavage of the carbon-nitrogen bond in imidazolone-5-propanoate to yield N-formimidoyl-L-glutamate. It is the third step in the universal histidine degradation pathway. This is Imidazolonepropionase from Shewanella putrefaciens (strain CN-32 / ATCC BAA-453).